The primary structure comprises 148 residues: Ribose-5-P isomerase B (148 aa).

8–9 serves as a coordination point for D-ribulose 5-phosphate; sequence DE. The Proton acceptor role is filled by cysteine 65. D-ribulose 5-phosphate contacts are provided by residues 66–70, asparagine 99, arginine 132, and lysine 136; that span reads GTGIG.

The protein belongs to the LacAB/RpiB family.

It carries out the reaction aldehydo-D-ribose 5-phosphate = D-ribulose 5-phosphate. It functions in the pathway carbohydrate degradation; pentose phosphate pathway; D-ribose 5-phosphate from D-ribulose 5-phosphate (non-oxidative stage): step 1/1. In terms of biological role, catalyzes the interconversion of ribulose-5-P and ribose-5-P. This Listeria innocua serovar 6a (strain ATCC BAA-680 / CLIP 11262) protein is Ribose-5-P isomerase B.